A 560-amino-acid polypeptide reads, in one-letter code: Eukaryotic translation initiation factor 3 subunit D-1 (560 aa).

A disordered region spans residues 98-166 (VQKPPHQRGR…RGPPPKMRES (69 aa)). A compositionally biased stretch (basic residues) spans 100 to 121 (KPPHQRGRFRNMRNSRSGRGRN). Thr128 bears the Phosphothreonine mark. The span at 147–156 (GRGMGKKFGH) shows a compositional bias: basic residues. The RNA gate stretch occupies residues 291–305 (EFDLLTVNESSVEPP).

This sequence belongs to the eIF-3 subunit D family. In terms of assembly, component of the eukaryotic translation initiation factor 3 (eIF-3) complex. The eIF-3 complex interacts with pix.

The protein localises to the cytoplasm. In terms of biological role, mRNA cap-binding component of the eukaryotic translation initiation factor 3 (eIF-3) complex, which is involved in protein synthesis of a specialized repertoire of mRNAs and, together with other initiation factors, stimulates binding of mRNA and methionyl-tRNAi to the 40S ribosome. The eIF-3 complex specifically targets and initiates translation of a subset of mRNAs involved in cell proliferation. In the eIF-3 complex, eif3d specifically recognizes and binds the 7-methylguanosine cap of a subset of mRNAs. The sequence is that of Eukaryotic translation initiation factor 3 subunit D-1 from Drosophila yakuba (Fruit fly).